Reading from the N-terminus, the 444-residue chain is Probable polygalacturonase At1g80170 (444 aa).

Residues 1–28 (MSYSRGGTLVTLLLLLVVASSLALTANA) form the signal peptide. PbH1 repeat units lie at residues 208 to 234 (CRRVTISGLKVIAPATSPNTDGIHISV), 235 to 256 (SRGIVIDNTTVSTGDDCISIVK), 258 to 278 (STQISISNIICGPGHGISIGS), 288 to 309 (VRDITVDTAIISDTANGVRIKT), 317 to 338 (VSKIIFRNIKMNNVSNPIIIDQ), and 351 to 378 (TSAISIENISFVHVRGTSASKEAIKISC). The active-site Proton donor is the D249. H272 is a catalytic residue.

Belongs to the glycosyl hydrolase 28 family. In terms of tissue distribution, expressed in young, mature and dehiscing anthers. Found in stems, but not in roots or in abscission zone of floral organs.

The protein resides in the secreted. It localises to the cell wall. The catalysed reaction is (1,4-alpha-D-galacturonosyl)n+m + H2O = (1,4-alpha-D-galacturonosyl)n + (1,4-alpha-D-galacturonosyl)m.. The sequence is that of Probable polygalacturonase At1g80170 from Arabidopsis thaliana (Mouse-ear cress).